A 342-amino-acid polypeptide reads, in one-letter code: NADH-quinone oxidoreductase subunit H 1 (342 aa).

8 consecutive transmembrane segments (helical) span residues 7–27 (FLLE…VIAM), 78–98 (ALFI…GAVI), 120–140 (IGVL…MIGG), 166–186 (MGLS…GEIV), 193–213 (WWNI…SFAE), 245–265 (LFAE…FYFG), 284–304 (ILGT…FMWV), and 322–342 (KIMI…ILLF).

The protein belongs to the complex I subunit 1 family. In terms of assembly, NDH-1 is composed of 14 different subunits. Subunits NuoA, H, J, K, L, M, N constitute the membrane sector of the complex.

The protein localises to the cell inner membrane. The enzyme catalyses a quinone + NADH + 5 H(+)(in) = a quinol + NAD(+) + 4 H(+)(out). Its function is as follows. NDH-1 shuttles electrons from NADH, via FMN and iron-sulfur (Fe-S) centers, to quinones in the respiratory chain. The immediate electron acceptor for the enzyme in this species is believed to be ubiquinone. Couples the redox reaction to proton translocation (for every two electrons transferred, four hydrogen ions are translocated across the cytoplasmic membrane), and thus conserves the redox energy in a proton gradient. This subunit may bind ubiquinone. The chain is NADH-quinone oxidoreductase subunit H 1 from Cytophaga hutchinsonii (strain ATCC 33406 / DSM 1761 / CIP 103989 / NBRC 15051 / NCIMB 9469 / D465).